The chain runs to 317 residues: UV DNA damage endonuclease (317 aa).

The protein belongs to the uve1/UvsE family.

Functionally, component in a DNA repair pathway. Removal of UV LIGHT damaged nucleotides. Recognizes pyrimidine dimers and cleave a phosphodiester bond immediately 5' to the lesion. The protein is UV DNA damage endonuclease of Bacillus anthracis (strain A0248).